The primary structure comprises 503 residues: Nuclear respiratory factor 1 (503 aa).

Residues 1-78 form a dimerization region; it reads MEEHGVTQTE…AHLAAAGPVG (78 aa). A disordered region spans residues 36 to 57; it reads SMLSADEDSPSSPEDTSYDDSD. Phosphoserine; by CK2 is present on residues Ser39, Ser44, Ser46, Ser47, and Ser52. A Nuclear localization signal motif is present at residues 88–116; sequence GKKRKRPHVFESNPSIRKRQQTRLLRKLR. The DNA-binding element occupies 109-305; the sequence is TRLLRKLRAT…SIAHLVPSQT (197 aa). Residue Lys139 forms a Glycyl lysine isopeptide (Lys-Gly) (interchain with G-Cter in SUMO2) linkage. A required for transcriptional activation region spans residues 301–476; the sequence is VPSQTVVQTF…AQGNGPVQVA (176 aa).

Belongs to the NRF1/Ewg family. As to quaternary structure, homodimer. Binds DNA as a dimer. Interacts with PPRC1. Phosphorylation enhances DNA binding. In terms of tissue distribution, ubiquitously expressed with strongest expression in skeletal muscle.

It is found in the nucleus. Functionally, transcription factor that activates the expression of the EIF2S1 (EIF2-alpha) gene. Links the transcriptional modulation of key metabolic genes to cellular growth and development. Implicated in the control of nuclear genes required for respiration, heme biosynthesis, and mitochondrial DNA transcription and replication. This Homo sapiens (Human) protein is Nuclear respiratory factor 1 (NRF1).